We begin with the raw amino-acid sequence, 399 residues long: Serine/threonine-protein kinase PKZ1 (399 aa).

The disordered stretch occupies residues 30-50 (PMQCAYQTQSHSNPEGAKRGR). Residues 92-371 (WQLFDQIGAG…ADQMLQHPWM (280 aa)) form the Protein kinase domain. ATP contacts are provided by residues 98 to 106 (IGAGAFGVV) and lysine 121. The active-site Proton acceptor is aspartate 219.

The protein belongs to the protein kinase superfamily. CAMK Ser/Thr protein kinase family. Interacts with BZP1.

The catalysed reaction is L-seryl-[protein] + ATP = O-phospho-L-seryl-[protein] + ADP + H(+). It carries out the reaction L-threonyl-[protein] + ATP = O-phospho-L-threonyl-[protein] + ADP + H(+). May regulate an early stage of the zoospore pathway. In Phytophthora infestans (Potato late blight agent), this protein is Serine/threonine-protein kinase PKZ1.